Consider the following 359-residue polypeptide: uncharacterized protein (359 aa).

Residues 1-15 (MSIVLAIDTATAAVT) form the signal peptide. An N-acetyltransferase domain is found at 212–359 (IVIGTLTPAD…DAYLMRREAQ (148 aa)).

This is an uncharacterized protein from Mycobacterium leprae (strain TN).